We begin with the raw amino-acid sequence, 127 residues long: Small ribosomal subunit protein uS13 (127 aa).

The segment at 93-127 (RRGMPVRGQRTRTNARTRRGRRGQAIGIKKKATKK) is disordered.

Belongs to the universal ribosomal protein uS13 family. Part of the 30S ribosomal subunit. Forms a loose heterodimer with protein S19. Forms two bridges to the 50S subunit in the 70S ribosome.

Located at the top of the head of the 30S subunit, it contacts several helices of the 16S rRNA. In the 70S ribosome it contacts the 23S rRNA (bridge B1a) and protein L5 of the 50S subunit (bridge B1b), connecting the 2 subunits; these bridges are implicated in subunit movement. Contacts the tRNAs in the A and P-sites. In Chloroflexus aurantiacus (strain ATCC 29366 / DSM 635 / J-10-fl), this protein is Small ribosomal subunit protein uS13.